We begin with the raw amino-acid sequence, 1209 residues long: Major DNA-binding protein (1209 aa).

A disordered region spans residues 290–312 (NAGKGSGRAQRQGDGSGSKNSAS). Residues 503–516 (CGLCNQATRPACAH) fold into a zinc finger. The Required for filament formation signature appears at 849–850 (FW). The segment at 1182-1209 (QKRSLPDDILFDMGAPPEKKSGLTFDML) is required for nuclear localization.

This sequence belongs to the herpesviridae major DNA-binding protein family. Homooligomers. Forms double-helical filaments necessary for the formation of replication compartments within the host nucleus. Interacts with the origin-binding protein. Interacts with the helicase primase complex; this interaction stimulates primer synthesis activity of the helicase-primase complex. Interacts with the DNA polymerase. Interacts with the alkaline exonuclease; this interaction increases its nuclease processivity.

Its subcellular location is the host nucleus. Functionally, plays several crucial roles in viral infection. Participates in the opening of the viral DNA origin to initiate replication by interacting with the origin-binding protein. May disrupt loops, hairpins and other secondary structures present on ssDNA to reduce and eliminate pausing of viral DNA polymerase at specific sites during elongation. Promotes viral DNA recombination by performing strand-transfer, characterized by the ability to transfer a DNA strand from a linear duplex to a complementary single-stranded DNA circle. Can also catalyze the renaturation of complementary single strands. Additionally, reorganizes the host cell nucleus, leading to the formation of prereplicative sites and replication compartments. This process is driven by the protein which can form double-helical filaments in the absence of DNA. The polypeptide is Major DNA-binding protein (Equine herpesvirus 1 (strain Ab4p) (EHV-1)).